The sequence spans 1441 residues: Tripeptidyl-peptidase 2 (1441 aa).

Residues 62-89 (AESSERSNSSKKTTNKEQSDKSAESRMA) are disordered. Positions 75–85 (TNKEQSDKSAE) are enriched in basic and acidic residues. Residues 107–608 (ETGVLNFLQK…HGLLNVEKAF (502 aa)) form the Peptidase S8 domain. Residues Asp131, His359, and Ser549 each act as charge relay system in the active site. A compositionally biased stretch (low complexity) spans 1139-1155 (TANGAKPKAPATPQAAT). 2 disordered regions span residues 1139–1190 (TANG…KANA) and 1255–1274 (QKTSPPEAGESADKQKEDQK). Residue Ser1182 is modified to Phosphoserine. Basic and acidic residues predominate over residues 1265–1274 (SADKQKEDQK).

Belongs to the peptidase S8 family. As to quaternary structure, homooligomer; forms a complex of 6 MDa probably composed of 40 subunits. Forms a structure consisting of 2 segmented and twisted strands that form a spindle-shaped structure. Each strand is composed of 10 segments (a segment being a homodimer oriented head to head), stacking of these segments leads to the formation of a twisted single strand. 2 strands compose the fully assembled spindle.

The protein resides in the cytoplasm. The catalysed reaction is Release of an N-terminal tripeptide from a polypeptide.. With respect to regulation, inhibited by phenylmethanesulfonyl fluoride (PMSF) and butabindide, but not by peptidase inhibitor pepstatin, EDTA, nor bestatin. Functionally, component of the proteolytic cascade acting downstream of the 26S proteasome in the ubiquitin-proteasome pathway. Efficiently cleaves Ala-Ala-Ala-polypeptide and Pro-Pro-Ala-polypeptide, Val-Leu-Lys-polypeptide only at high concentration. Does not cleave Ala-Phe-Pro-polypeptide nor Pro-Leu-Gly-polypeptide. This is Tripeptidyl-peptidase 2 (TppII) from Drosophila melanogaster (Fruit fly).